Consider the following 191-residue polypeptide: MYVGRFIVVAPDRAAYRVSSRSFPNRRIVDRDGTLTVGPTEDAPETDNPYISYNCLRTVGDDYAVVGNGTQVDPIAEKLSLGYPPRDALAESLLALDYEKDDYDTPRIAGVVGDESYIGTVRRDALIVEAVEEPTLVATYEKSEPEPTSLGADDPSELAAELYDRDLEHPVCAAGVVADGDSFEVGYYNGE.

It belongs to the archaeal IMP cyclohydrolase family.

It carries out the reaction IMP + H2O = 5-formamido-1-(5-phospho-D-ribosyl)imidazole-4-carboxamide. It participates in purine metabolism; IMP biosynthesis via de novo pathway; IMP from 5-formamido-1-(5-phospho-D-ribosyl)imidazole-4-carboxamide: step 1/1. In terms of biological role, catalyzes the cyclization of 5-formylamidoimidazole-4-carboxamide ribonucleotide to IMP. The sequence is that of IMP cyclohydrolase from Natronomonas pharaonis (strain ATCC 35678 / DSM 2160 / CIP 103997 / JCM 8858 / NBRC 14720 / NCIMB 2260 / Gabara) (Halobacterium pharaonis).